The following is a 431-amino-acid chain: Isochorismate synthase MenF (431 aa).

Lys190 functions as the Proton acceptor in the catalytic mechanism. The active-site Proton donor is the Glu240. Residues Glu284 and Glu416 each contribute to the Mg(2+) site.

Belongs to the isochorismate synthase family. Homodimer. The cofactor is Mg(2+).

The enzyme catalyses chorismate = isochorismate. It participates in quinol/quinone metabolism; 1,4-dihydroxy-2-naphthoate biosynthesis; 1,4-dihydroxy-2-naphthoate from chorismate: step 1/7. It functions in the pathway quinol/quinone metabolism; menaquinone biosynthesis. Its function is as follows. Catalyzes the conversion of chorismate to isochorismate. Can also catalyze the reverse reaction, but with a lower efficiency. In Escherichia coli (strain K12), this protein is Isochorismate synthase MenF.